A 125-amino-acid polypeptide reads, in one-letter code: Secretion system apparatus protein SsaO (125 aa).

In Salmonella typhimurium (strain LT2 / SGSC1412 / ATCC 700720), this protein is Secretion system apparatus protein SsaO (ssaO).